The following is a 1131-amino-acid chain: Protein DWARF 53 (1131 aa).

A Clp R domain is found at 8–181 (ARQCLSPAAV…KLAILRPAPP (174 aa)). 2 repeat regions span residues 12-85 (LSPA…LDRL) and 103-181 (VSNS…PAPP). The segment at 511-574 (NRDPYKPFPR…ISSPSVTNKR (64 aa)) is disordered. Positions 558-569 (SSSTARPISSPS) are enriched in low complexity. Residues 578 to 582 (LVLNL) carry the EAR 1 motif. The disordered stretch occupies residues 588 to 655 (KSDENLQERG…KRVEDSERSV (68 aa)). Residues 597-609 (GMQSQHGTLSNVD) show a composition bias toward polar residues. Positions 646-655 (KRVEDSERSV) are enriched in basic and acidic residues. Positions 799 to 803 (LDLNL) match the EAR 2 motif. Disordered stretches follow at residues 951 to 970 (ISDD…RLHR) and 976 to 1002 (FDLN…NSYG). The short motif at 976–981 (FDLNLP) is the EAR 3 element. Acidic residues predominate over residues 982-993 (VDEDEPLDADDD).

This sequence belongs to the ClpA/ClpB family. As to quaternary structure, interacts with D3. Interacts with D14. The interaction with D14 is enhanced in the presence of strigolactones. The interaction with D14 occurs in the presence of (2'R) stereoisomers of strigolactones, but not (2'S) stereoisomers. Interacts with the TOPLESS-related proteins TPR1, TPR2 and TPR3. Interacts with SPL14/IPA1. Polyubiquitinated. Strigolactone, but not karrikin, triggers rapid SCF(D3)-dependent degradation via the proteasome. In terms of tissue distribution, expressed in the shoot bases of seedlings, young leaves, axillary buds and young panicles. Expressed in young roots vasculature, culms, internodes and nodes, preferentially in the parenchyma cells surrounding the xylem.

It localises to the nucleus. Repressor of strigolactones (SL) signaling. Subjected to a negative feedback control of SL signaling. Suppresses the transcriptional activation activity of SPL14/IPA1 in SL signaling. Acts with SPL14/IPA1 to mediate the SL-regulated tiller development. Subject to a negative feedback regulation by SPL14/IPA1, which binds to D53 promoter to repress D53 gene expression. The sequence is that of Protein DWARF 53 from Oryza sativa subsp. japonica (Rice).